The following is a 348-amino-acid chain: Fe-S cluster assembly protein DRE2 (348 aa).

Residues 1–162 are N-terminal SAM-like domain; sequence MSQYKTGLLL…KKASSSTSNL (162 aa). A disordered region spans residues 137–170; the sequence is KTNNTKLQSGSKLPTFKKASSSTSNLPSFKKADH. A compositionally biased stretch (polar residues) spans 144 to 163; it reads QSGSKLPTFKKASSSTSNLP. The linker stretch occupies residues 163 to 242; that stretch reads PSFKKADHSR…EEELIDEDGS (80 aa). Serine 206 is modified (phosphoserine). Residues cysteine 252, cysteine 263, cysteine 266, and cysteine 268 each coordinate [2Fe-2S] cluster. Positions 252 to 268 are fe-S binding site A; it reads CGKSKTKKKKACKDCTC. 4 residues coordinate [4Fe-4S] cluster: cysteine 311, cysteine 314, cysteine 322, and cysteine 325. 2 short sequence motifs (cx2C motif) span residues 311-314 and 322-325; these read CGSC and CSGC. The interval 311–325 is fe-S binding site B; sequence CGSCSLGDAFRCSGC.

Belongs to the anamorsin family. In terms of assembly, monomer. Interacts with TAH18. Interacts with MIA40. [2Fe-2S] cluster serves as cofactor. The cofactor is [4Fe-4S] cluster.

The protein localises to the cytoplasm. Its subcellular location is the mitochondrion intermembrane space. In terms of biological role, component of the cytosolic iron-sulfur (Fe-S) protein assembly (CIA) machinery required for the maturation of extramitochondrial Fe-S proteins. Part of an electron transfer chain functioning in an early step of cytosolic Fe-S biogenesis, facilitating the de novo assembly of a [4Fe-4S] cluster on the scaffold complex CFD1-NBP35. Electrons are transferred to DRE2 from NADPH via the FAD- and FMN-containing protein TAH18. TAH18-DRE2 are also required for the assembly of the diferric tyrosyl radical cofactor of ribonucleotide reductase (RNR), probably by providing electrons for reduction during radical cofactor maturation in the catalytic small subunit RNR2. This Saccharomyces cerevisiae (strain Lalvin EC1118 / Prise de mousse) (Baker's yeast) protein is Fe-S cluster assembly protein DRE2.